The following is a 422-amino-acid chain: Ribosomal RNA small subunit methyltransferase B (422 aa).

S-adenosyl-L-methionine contacts are provided by residues 254 to 260 (CAAPGGK), Asp-277, Asp-303, and Asp-322. The active-site Nucleophile is the Cys-375.

This sequence belongs to the class I-like SAM-binding methyltransferase superfamily. RsmB/NOP family.

The protein localises to the cytoplasm. It carries out the reaction cytidine(967) in 16S rRNA + S-adenosyl-L-methionine = 5-methylcytidine(967) in 16S rRNA + S-adenosyl-L-homocysteine + H(+). Specifically methylates the cytosine at position 967 (m5C967) of 16S rRNA. This chain is Ribosomal RNA small subunit methyltransferase B, found in Proteus mirabilis (strain HI4320).